Consider the following 182-residue polypeptide: Crossover junction endodeoxyribonuclease RuvC (182 aa).

Active-site residues include aspartate 7, glutamate 67, and aspartate 139. 3 residues coordinate Mg(2+): aspartate 7, glutamate 67, and aspartate 139.

Belongs to the RuvC family. In terms of assembly, homodimer which binds Holliday junction (HJ) DNA. The HJ becomes 2-fold symmetrical on binding to RuvC with unstacked arms; it has a different conformation from HJ DNA in complex with RuvA. In the full resolvosome a probable DNA-RuvA(4)-RuvB(12)-RuvC(2) complex forms which resolves the HJ. Requires Mg(2+) as cofactor.

It localises to the cytoplasm. It catalyses the reaction Endonucleolytic cleavage at a junction such as a reciprocal single-stranded crossover between two homologous DNA duplexes (Holliday junction).. Functionally, the RuvA-RuvB-RuvC complex processes Holliday junction (HJ) DNA during genetic recombination and DNA repair. Endonuclease that resolves HJ intermediates. Cleaves cruciform DNA by making single-stranded nicks across the HJ at symmetrical positions within the homologous arms, yielding a 5'-phosphate and a 3'-hydroxyl group; requires a central core of homology in the junction. The consensus cleavage sequence is 5'-(A/T)TT(C/G)-3'. Cleavage occurs on the 3'-side of the TT dinucleotide at the point of strand exchange. HJ branch migration catalyzed by RuvA-RuvB allows RuvC to scan DNA until it finds its consensus sequence, where it cleaves and resolves the cruciform DNA. The sequence is that of Crossover junction endodeoxyribonuclease RuvC from Bordetella petrii (strain ATCC BAA-461 / DSM 12804 / CCUG 43448).